The following is a 509-amino-acid chain: Apurinic-apyrimidinic endonuclease 1 (509 aa).

A signal peptide spans 1–24 (MPRHCCCFVFHFLLYMLLINIVKN). Positions 144 to 188 (EEKDEECDEKTKQDNNKENIKNETIVQKKKIDKNNKTKEKIKTKS) are disordered. Composition is skewed to basic and acidic residues over residues 152-164 (EKTK…ENIK) and 175-188 (DKNN…KTKS). Residues histidine 291, histidine 331, glutamate 367, aspartate 401, histidine 404, histidine 438, aspartate 451, histidine 453, and glutamate 483 each coordinate Zn(2+). Histidine 404 lines the Mn(2+) pocket. Residues aspartate 451 and histidine 453 each contribute to the Mn(2+) site.

It belongs to the AP endonuclease 2 family. Requires Zn(2+) as cofactor. The cofactor is Mn(2+). In terms of processing, may be proteolytically cleaved.

It localises to the mitochondrion. Functionally, plays a role in mitochondrial DNA base excision repair (BER) pathway induced by oxidative stress. Has apurinic/apyrimidinic (AP) endonuclease activity towards double-stranded DNA (dsDNA) with a preference for C as opposite base. Has 3'-phosphatase activity; removes 3'-phosphate from blunt-end, recessed, and gapped DNA templates and thus, removes 3'-blocks for DNA polymerase activity during BER. Lacks 3'-5' exonuclease activity and does not cleave damaged bases by nucleotide incision repair (NIR). The chain is Apurinic-apyrimidinic endonuclease 1 from Plasmodium berghei (strain Anka).